The following is a 2602-amino-acid chain: MATTLLLFGPQAASMSKQSITQLQVALRDQEWAFDALSNVQPIIQRASTSISGLDQISLDERLADLTRWLKHGPKDQEELAEIPNIMLAPLTTLSHLVQYRRYIERHYPNESDAHAALLQQKPVATLGFCNGLLAAFATTSSATLNDWERYAAVATRLALLVGAVIDAADELQPHGPAASYGVSWRDIDGARQLEQILSPFPGDAYVSVWYDRSRATVTVSKHLVRTVLHLVEAAGMAVVPVRLRGRYHSRQHAEVAEALIRLCDAEPDLLALPDARNLCLPTYSNVGHGEVVREGRLHEIALQAMLVQQCDWYSTLSGITDESQVQVVCLSEVSTLPPSLTFKLKPQMEYFAPLEEKTAPKDNFSGRADGGSQFSFSMLENSTSPPSPAATSSNSHCEYSVDPRDIAIVGMSVKVAGADDVVEYESILRGGVSQHQQVRKNRVPFGYNSFRPEEPGHKWYGNFVRDVDAFDHKFFRKSSRESAAMDPQQRLVLQAAYQAVEQSGYYASGTEPDQHIGVYLGTCATDYEQNANCHAPGAFTVTGLLRGFIAGRISHFFGWTGPAMTYDTACSGSAVAIHSAVQALVSGECSAALAGGVNTIGNEVWFQNLAGAQFLSPTGQCKPFDDAADGYCRGEGIACVVLKPMAKAIADGNQIFGRIASSAVHQSVNCTPLFVPNVPSLSRLFGDVMRQARLEPHDISFVEAHGTGTPVGDPVEYESIRAILGGPLRDKPLSLGSAKGLVGHTESTSGVVSLVKVLLMMQSGFIPPQASYSKLSHRIAPSASAMIQVSTTLQPWTDSYKAALINNYGASGSNAAMVVTQGPAQTARSPRGEADGAHLPFWIPGFDSARIAAYCARLSAFIEANRSTIHLADIAYNISRQSNRTLSHALLFRCNSIDSLVGQLSSAAAPQTVQVKPSRPVILCFGGQMSTFVGLNREIYDSSPILRDHLSQCDAAIRALGFGSIFPSIFATIPIEDTVLLQTVLFSFQYACAKSWIDCGVRPTAVVGHSFGEITALCIAEVLSLDDTIKLVTRRAKVVRDSWGADRGVMMAVEGEVDQVERLLEEANKDLDTHSPASIACYNGLRNFTLAGSTLAMERVALALSSSAYASIRGKKLNVTNAFHSALVDPLLQELEQAGSDLTFNKARIKVERATKESTTGEPCAPKFVGEHMRNPVFFRQAAQRLARDNPSAVWIEAGSATKITAMARRSLDSNAESHFQGITVTGEDGLDKLTEATLSLWKQGLNVAFWAHHGPQATRDHQPLLLPPYQFEKSRHWLDVKAPPVMLADTAQGDNGPLFGLLTFVGFQDAEERRARFKINTESERYKSLVIPHIIARTAPICPATLEYSLAIQALLTLRDHKHFESRDMHPVIRDMRNDAPLCLNSDQSTWLDLEANKTSPRSLVWKVFTAPVSRQLDSHNDSDETLCAQGKLDLLSSSETTEFAQYEQLATYDACVSLLQDDDGDVSGLQGRSVYRSLADVVDYGVHYQKVRRVSGRNSESAGIVRGASGGNWLSDLPIIDSFSQVAGVWVNCLADRTPGSDDLFLATGCETIMTSPTFLHADRGGKSWHVWAKHHRESERSYRTDVLVFDATNGQLADVFLGIAYTRIPRHSMTRLLSKLSEPSALQAQAALPSSTGHEGLTAKTASSQRLGQDTLKQTVGQIIASLSGVEAAQITDESALADIGIDSLAGMELARDIESVLGCKLDLEELLFTHDTFGAFVRYISKVVNGEDDLGTPSHSDNDSHVTGTTATPNSSSASSDTHHGNSKLQIAVAQSSQADASSSSPLPPQHVISSFEQVKLSTDQRIREEKADNTDDIIVSRSNLLCVALVVEAFEQLGCPLRGVPAGEALKRIQHAPQHARLVDWLYRFLEDEARLINTEGTLILRTSNGAPNKTSQAIFQDLEHANDRWIESHRLANYAGKNLADVVSGKKEGIHVLFGSAEGRELVRGLYSGLPFNCLFYKQVRDTISLIVEKVKDDFQGPLRILEMGAGTGGTTQVLAPFLATLDIPVEYTMTDLSPYMVAQAQRSFGTKYPFMHFAVHDIEKPPAESLLGTQHIIVASNAVHATANLADSAANIRSTLRPDGILLLVEMTESLPFVDIVFGLLEGWWRFADGREHAIVPAEQWEARLRDAGYGHVDWTDGVFSENRLQKVILAMASELPDGLPVSSGVPEPVQPALEVTTTVAREANAEAYVTQYSADFTYDGESSGNIEAHEAQDSRIVVVTGATGSLGSHMVASFAESPSVTSVVCINRRNSGKATALERQQEAFTSRGITLSPDAFGKLRVFATDTAQPQLGLPLEEYEWLVTHATHIVHNAWPMSASRPIQAFQPQFKTMSRLLDLAAAIAQQSTSRFVVFQLISSIGVVGSAPMIDTRVPERRVPVSYTLPNGYCEAKWVCEQLLNETLHQYPERFRAMVVRPGQIAGSSVNGVWNPVEHFPALVRSSQALRAFPALGGTLQWIPVDVAAGTVADLALNQQAGEPVYHIDNPVGQSWSNMVPILADELNIPGERIIPLGEWVRKVKRSSLLETENPASRLPDFFEQHFERMSCGGLILDVALATKRSGTLAAQGAVSADTARKYIQTWKDMKFLDRY.

Cys130 functions as the Nucleophile; for transacylase activity in the catalytic mechanism. The active-site Proton donor/acceptor; for transacylase activity is the His249. Positions 379–398 (MLENSTSPPSPAATSSNSHC) are disordered. Residues 382–396 (NSTSPPSPAATSSNS) are compositionally biased toward low complexity. Positions 404-822 (PRDIAIVGMS…GSNAAMVVTQ (419 aa)) constitute a Ketosynthase family 3 (KS3) domain. Catalysis depends on for beta-ketoacyl synthase activity residues Cys571, His706, and His745. The tract at residues 926-1216 (FGGQMSTFVG…AMARRSLDSN (291 aa)) is malonyl-CoA:ACP transacylase (MAT). Residues 1298 to 1442 (GPLFGLLTFV…GKLDLLSSSE (145 aa)) form an N-terminal hotdog fold region. Positions 1298-1618 (GPLFGLLTFV…YTRIPRHSMT (321 aa)) constitute a PKS/mFAS DH domain. The segment at 1331–1616 (LVIPHIIART…IAYTRIPRHS (286 aa)) is product template (PT) domain. His1335 functions as the Proton acceptor; for dehydratase activity in the catalytic mechanism. Residues 1467 to 1618 (GDVSGLQGRS…YTRIPRHSMT (152 aa)) are C-terminal hotdog fold. The Proton donor; for dehydratase activity role is filled by Asp1524. The 76-residue stretch at 1658-1733 (DTLKQTVGQI…AFVRYISKVV (76 aa)) folds into the Carrier domain. Residue Ser1692 is modified to O-(pantetheine 4'-phosphoryl)serine. The tract at residues 1737-1772 (DDLGTPSHSDNDSHVTGTTATPNSSSASSDTHHGNS) is disordered. Positions 1752-1765 (TGTTATPNSSSASS) are enriched in low complexity. A methyltransferase domain region spans residues 1979–2150 (VEKVKDDFQG…GYGHVDWTDG (172 aa)). The segment at 2229-2530 (IVVVTGATGS…IPLGEWVRKV (302 aa)) is NADPH-binding domain.

Pantetheine 4'-phosphate serves as cofactor.

The protein operates within mycotoxin biosynthesis. Functionally, non-reducing polyketide synthase; part of the satratoxin SC1 cluster involved in the biosynthesis of satratoxins, trichothecene mycotoxins that are associated with human food poisonings. Satratoxins are suggested to be made by products of multiple gene clusters (SC1, SC2 and SC3) that encode 21 proteins in all, including polyketide synthases, acetyltransferases, and other enzymes expected to modify the trichothecene skeleton. SC1 encodes 10 proteins, SAT1 to SAT10. The largest are SAT8, which encodes a putative polyketide synthase (PKS) with a conventional non-reducing architecture, and SAT10, a putative protein containing four ankyrin repeats and thus may be involved in protein scaffolding. The putative short-chain reductase SAT3 may assist the PKS in some capacity. SAT6 contains a secretory lipase domain and acts probably as a trichothecene esterase. SAT5 encodes a putative acetyltransferase, and so, with SAT6, may affect endogenous protection from toxicity. The probable transcription factor SAT9 may regulate the expression of the SC1 cluster. SC2 encodes proteins SAT11 to SAT16, the largest of which encodes the putative reducing PKS SAT13. SAT11 is a cytochrome P450 monooxygenase, while SAT14 and SAT16 are probable acetyltransferases. The SC2 cluster may be regulated by the transcription factor SAT15. SC3 is a small cluster that encodes 5 proteins, SAT17 to SAT21. SAT21 is a putative MFS-type transporter which may have a role in exporting secondary metabolites. The four other proteins putatively encoded in SC3 include the taurine hydroxylase-like protein SAT17, the O-methyltransferase SAT18, the acetyltransferase SAT19, and the Cys6-type zinc finger SAT20, the latter being probably involved in regulation of SC3 expression. The polypeptide is Non-reducing polyketide synthase SAT8 (Stachybotrys chartarum (strain CBS 109288 / IBT 7711) (Toxic black mold)).